A 125-amino-acid chain; its full sequence is MORF4 family-associated protein 1 (125 aa).

The tract at residues 76–99 (ESALNHLQGAGGAEPRGPRAEKAD) is disordered. A coiled-coil region spans residues 94–124 (RAEKADEKAQEMAKMAEMLVQLVRRIEKSES).

The protein belongs to the MORF4 family-associated protein family. Found in a complex composed of MORF4L1, MRFAP1 and RB1. Interacts via its N-terminus with MORF4L1. Interacts with CSTB and MORF4L2.

Its subcellular location is the nucleus. It is found in the cytoplasm. It localises to the perinuclear region. The chain is MORF4 family-associated protein 1 from Rattus norvegicus (Rat).